The chain runs to 1010 residues: Importin-8 (1010 aa).

One can recognise an Importin N-terminal domain in the interval alanine 22 to arginine 102. The span at asparagine 886–isoleucine 895 shows a compositional bias: basic and acidic residues. Residues asparagine 886 to aspartate 932 are disordered. The span at glutamate 896 to threonine 909 shows a compositional bias: acidic residues. 2 positions are modified to phosphoserine: serine 902 and serine 903. A compositionally biased stretch (polar residues) spans serine 910–glycine 921.

This sequence belongs to the importin beta family. Forms a heterodimer with KPNB1. Interacts with SRP19. Interacts with RPL23A. Binds directly to nuclear pore complexes. Interacts with LRPPRC; the interaction occurs when LRPPRC is in its RNA-free form and promotes import of LRPPRC to the nucleus to allow for EIF4E-mediated export of mRNAS from the nucleus to the cytoplasm.

The protein resides in the cytoplasm. It localises to the nucleus. In terms of biological role, involved in nuclear protein import, either by acting as autonomous nuclear transport receptor or as an adapter-like protein in association with the importin-beta subunit KPNB1. Acting autonomously, may serve as receptor for nuclear localization signals (NLS) and promote translocation of import substrates through the nuclear pore complex (NPC) by an energy requiring, Ran-dependent mechanism. At the nucleoplasmic side of the NPC, Ran binds to importin, the importin/substrate complex dissociates and importin is re-exported from the nucleus to the cytoplasm where GTP hydrolysis releases Ran. The directionality of nuclear import is thought to be conferred by an asymmetric distribution of the GTP- and GDP-bound forms of Ran between the cytoplasm and nucleus. In vitro mediates the nuclear import of the signal recognition particle protein SRP19. May also be involved in cytoplasm-to-nucleus shuttling of a broad spectrum of other cargos, including Argonaute-microRNAs complexes, the JUN protein, RELA/NF-kappa-B p65 subunit, the translation initiation factor EIF4E and a set of receptor-activated mothers against decapentaplegic homolog (SMAD) transcription factors that play a critical role downstream of the large family of transforming growth factor beta and bone morphogenetic protein (BMP) cytokines. The sequence is that of Importin-8 from Mus musculus (Mouse).